The sequence spans 39 residues: Natriuretic peptide PaNP-d (39 aa).

Positions 1-8 are excised as a propeptide; the sequence is SGSKTAEI. The disordered stretch occupies residues 1-39; sequence SGSKTAEIDDGCFGLPLDPIGSTSGMGCRSVPKPIPGGS. Cysteines 12 and 28 form a disulfide.

Belongs to the natriuretic peptide family. As to expression, expressed by the venom gland.

It localises to the secreted. Functionally, snake venom natriuretic peptide that targets both NPR1 and NPR2. Exhibits hypotensive and vasodepressor activities. This is Natriuretic peptide PaNP-d from Pseudechis australis (Mulga snake).